Here is a 262-residue protein sequence, read N- to C-terminus: Zinc finger protein ehn-3 (262 aa).

4 C2H2-type zinc fingers span residues 2–24 (EKCD…KVMH), 30–52 (FECQ…MMTH), 59–84 (FECP…DSEH), and 92–115 (AKCK…HTAH). Positions 179–204 (SVKSAKELSPTPSTEIETPEEEELDG) are disordered. Low complexity predominate over residues 185–194 (ELSPTPSTEI). The segment covering 195–204 (ETPEEEELDG) has biased composition (acidic residues). C2H2-type zinc fingers lie at residues 208–230 (WYCD…SGLH) and 236–260 (FKCS…YANH).

Belongs to the krueppel C2H2-type zinc-finger protein family.

Its subcellular location is the nucleus. Its function is as follows. Together with the zinc finger protein ztf-16, plays a role in gonadogenesis, specifically in somatic gonad precursor cell development. This is possibly by regulating tra-1 gene expression. In terms of biological role, required for proper gonadal primordium assembly and somatic gonad precursor cell morphology. The polypeptide is Zinc finger protein ehn-3 (Caenorhabditis elegans).